Consider the following 597-residue polypeptide: Nuclear factor erythroid 2-related factor 2 (597 aa).

A DLG motif motif is present at residues 29 to 31 (DLG). A Phosphoserine; by PKC modification is found at serine 40. The short motif at 79–82 (ETGE) is the ETGE motif element. Serine 207 is modified (phosphoserine). Positions 327-440 (TMEFNDSDSG…APFTKDKHSS (114 aa)) are disordered. The segment covering 333–345 (SDSGISLNTSPSR) has biased composition (polar residues). Residues lysine 454, lysine 464, and lysine 479 are each glycosylated (N-linked (Glc) (glycation) lysine). Residues 489-552 (LIRDIRRRGK…HLLKRRLSTL (64 aa)) enclose the bZIP domain. N-linked (Glc) (glycation) arginine glycosylation occurs at arginine 491. Positions 491–510 (RDIRRRGKNKVAAQNCRKRK) are basic motif. Residues 514-521 (IVELEQDL) are leucine-zipper. Arginine 561 carries N-linked (Glc) (glycation) arginine glycosylation. Residues 563-597 (EDGKPYSPSEYSLQQTRDGNVFLVPKSKKPDTKKN) form a disordered region. The N-linked (Glc) (glycation) lysine glycan is linked to lysine 566. Residues 571-580 (SEYSLQQTRD) show a composition bias toward polar residues. The segment at 583–588 (VFLVPK) is mediates interaction with CHD6 and is necessary to activate transcription. 2 positions are modified to N6-acetyllysine; by CREBBP: lysine 588 and lysine 591.

It belongs to the bZIP family. CNC subfamily. As to quaternary structure, heterodimer; heterodimerizes with small Maf proteins. Interacts (via the bZIP domain) with MAFG and MAFK; required for binding to antioxidant response elements (AREs) on DNA. Interacts with KEAP1; the interaction is direct and promotes ubiquitination by the BCR(KEAP1) E3 ubiquitin ligase complex. Forms a ternary complex with PGAM5 and KEAP1. Interacts with EEF1D at heat shock promoter elements (HSE). Interacts via its leucine-zipper domain with the coiled-coil domain of PMF1. Interacts with CHD6; involved in activation of the transcription. Interacts with ESRRB; represses NFE2L2 transcriptional activity. Interacts with MOTS-c, a peptide produced by the mitochondrially encoded 12S rRNA MT-RNR1; the interaction occurs in the nucleus following metabolic stress. Ubiquitinated in the cytoplasm by the BCR(KEAP1) E3 ubiquitin ligase complex leading to its degradation. In response to oxidative stress, electrophile metabolites, such as sulforaphane, modify KEAP1, leading to inhibit activity of the BCR(KEAP1) complex, promoting NFE2L2/NRF2 nuclear accumulation and activity. In response to autophagy, the BCR(KEAP1) complex is inactivated. In terms of processing, phosphorylated by EIF2AK3/PERK following unfolded protein response (UPR), promoting dissociation from its cytoplasmic inhibitor KEAP1, followed by its translocation into the nucleus. Phosphorylation of Ser-40 by PKC in response to oxidative stress dissociates NFE2L2 from its cytoplasmic inhibitor KEAP1, promoting its translocation into the nucleus. Post-translationally, acetylation at Lys-588 and Lys-591 increases nuclear localization whereas deacetylation by SIRT1 enhances cytoplasmic presence. Glycation impairs transcription factor activity by preventing heterodimerization with small Maf proteins. Deglycation by FN3K restores activity. In terms of tissue distribution, widely expressed. Highest expression in liver, skeletal muscle, luminal cells of the stomach and intestine, lining of the bronchi and alveoli, and in renal tubules; followed by heart, spleen, testis and brain.

The protein resides in the cytoplasm. It localises to the cytosol. The protein localises to the nucleus. Its function is as follows. Transcription factor that plays a key role in the response to oxidative stress: binds to antioxidant response (ARE) elements present in the promoter region of many cytoprotective genes, such as phase 2 detoxifying enzymes, and promotes their expression, thereby neutralizing reactive electrophiles. In normal conditions, ubiquitinated and degraded in the cytoplasm by the BCR(KEAP1) complex. In response to oxidative stress, electrophile metabolites inhibit activity of the BCR(KEAP1) complex, promoting nuclear accumulation of NFE2L2/NRF2, heterodimerization with one of the small Maf proteins and binding to ARE elements of cytoprotective target genes. The NFE2L2/NRF2 pathway is also activated in response to selective autophagy: autophagy promotes interaction between KEAP1 and SQSTM1/p62 and subsequent inactivation of the BCR(KEAP1) complex, leading to NFE2L2/NRF2 nuclear accumulation and expression of cytoprotective genes. The NFE2L2/NRF2 pathway is also activated during the unfolded protein response (UPR), contributing to redox homeostasis and cell survival following endoplasmic reticulum stress. May also be involved in the transcriptional activation of genes of the beta-globin cluster by mediating enhancer activity of hypersensitive site 2 of the beta-globin locus control region. Also plays an important role in the regulation of the innate immune response. It is a critical regulator of the innate immune response and survival during sepsis by maintaining redox homeostasis and restraint of the dysregulation of pro-inflammatory signaling pathways like MyD88-dependent and -independent and TNF-alpha signaling. Suppresses macrophage inflammatory response by blocking pro-inflammatory cytokine transcription and the induction of IL6. Binds to the proximity of pro-inflammatory genes in macrophages and inhibits RNA Pol II recruitment. The inhibition is independent of the Nrf2-binding motif and reactive oxygen species level. Represses antiviral cytosolic DNA sensing by suppressing the expression of the adapter protein STING1 and decreasing responsiveness to STING1 agonists while increasing susceptibility to infection with DNA viruses. The polypeptide is Nuclear factor erythroid 2-related factor 2 (Mus musculus (Mouse)).